The primary structure comprises 245 residues: Small ribosomal subunit protein uS3 (245 aa).

The region spanning 38–106 (IRKYLNTRLA…EVQINIFEIK (69 aa)) is the KH type-2 domain. The disordered stretch occupies residues 225–245 (YEGSGDKSVKRRKRNGIKKNE). The segment covering 233-245 (VKRRKRNGIKKNE) has biased composition (basic residues).

This sequence belongs to the universal ribosomal protein uS3 family. In terms of assembly, part of the 30S ribosomal subunit. Forms a tight complex with proteins S10 and S14.

In terms of biological role, binds the lower part of the 30S subunit head. Binds mRNA in the 70S ribosome, positioning it for translation. The polypeptide is Small ribosomal subunit protein uS3 (Azobacteroides pseudotrichonymphae genomovar. CFP2).